The chain runs to 428 residues: D-amino acid dehydrogenase (428 aa).

3–17 (VVILGSGVVGVASAY) lines the FAD pocket.

The protein belongs to the DadA oxidoreductase family. FAD is required as a cofactor.

The enzyme catalyses a D-alpha-amino acid + A + H2O = a 2-oxocarboxylate + AH2 + NH4(+). Its pathway is amino-acid degradation; D-alanine degradation; NH(3) and pyruvate from D-alanine: step 1/1. Functionally, oxidative deamination of D-amino acids. In Burkholderia vietnamiensis (strain G4 / LMG 22486) (Burkholderia cepacia (strain R1808)), this protein is D-amino acid dehydrogenase.